Consider the following 131-residue polypeptide: Putative superoxide reductase (131 aa).

6 residues coordinate Fe cation: E15, H17, H45, H51, C115, and H118.

This sequence belongs to the desulfoferrodoxin family. Fe cation serves as cofactor.

The catalysed reaction is reduced [rubredoxin] + superoxide + 2 H(+) = oxidized [rubredoxin] + H2O2. In terms of biological role, uses electrons from reduced NADP, by way of rubredoxin and an oxidoreductase, to catalyze the reduction of superoxide to hydrogen peroxide. This is Putative superoxide reductase from Thermotoga maritima (strain ATCC 43589 / DSM 3109 / JCM 10099 / NBRC 100826 / MSB8).